The primary structure comprises 179 residues: DELTA-actitoxin-Afr1e (179 aa).

An N-terminal alpha-helix that contributes to the pore region spans residues 1–29 (SADVAGAVIDGAGLGFDVLKTVLEALGNV). The N-terminal region stretch occupies residues 11–30 (GAGLGFDVLKTVLEALGNVK). Arg-31 is a binding site for an N-(acyl)-sphingosylphosphocholine. N-acetyl-D-glucosamine 6-sulfate contacts are provided by Tyr-51 and Arg-53. An N-(acyl)-sphingosylphosphocholine contacts are provided by Arg-53, Ser-54, Arg-79, Gly-85, Tyr-108, Tyr-113, Ser-114, Trp-116, Tyr-133, Tyr-137, Tyr-138, Arg-144, and Gly-168. Residues 105-120 (SVPYDYNWYSNWWNVR) form a trp-rich region, which is important for the binding to lipid membrane region. Position 138 (Tyr-138) interacts with N-acetyl-D-glucosamine 6-sulfate. The short motif at 144-146 (RGD) is the Cell attachment site, crucial for protein stability element.

This sequence belongs to the actinoporin family. Sea anemone subfamily. As to quaternary structure, octamer or nonamer in membranes. Monomer in the soluble state.

The protein resides in the secreted. Its subcellular location is the nematocyst. It localises to the target cell membrane. Functionally, pore-forming toxin (PFT) that consists of a crown-shaped octamer or nonamer that forms cation-selective hydrophilic pores of about 1.5 nm (inside) and 13 nm (outside) and causes cytolysis. It causes cardiac stimulation. Also causes hemolysis (HC(50)=1.6 nM). Interestingly, the Phe-16 is crucial for hemolysis. Pore formation is a multi-step process that involves specific recognition of membrane sphingomyelin (but neither cholesterol nor phosphatidylcholine) using aromatic rich region and adjacent phosphocholine (POC) binding site, firm binding to the membrane (mainly driven by hydrophobic interactions) accompanied by the transfer of the N-terminal region to the lipid-water interface and finally pore formation after oligomerization of monomers. It is probable that a dimeric form is an assembly intermediate before the complete oligomerization. The formation of stable pores occurs only in vesicles composed of DOPC/SM (there is no oligomerization when the PFT is treated with vesicles of DOPC or SM alone). The transmembrane pore displays 8 lateral perforations, one at each subunit-subunit interface, partially occupied by the acyl-chain region of a bridging lipid. Each pore contains 24 lipid molecules, firmly bound to each subunit, that is, 3 lipids (L1, L2, L3, L4 and/or L5) are associated to each subunit. Lipid L1 bridges 2 subunits, whereas lipids L2 and L3 bind to sites at single subunit. This Actinia fragacea (Strawberry anemone) protein is DELTA-actitoxin-Afr1e.